Reading from the N-terminus, the 220-residue chain is Probable GTP-binding protein EngB (220 aa).

In terms of domain architecture, EngB-type G spans Ala-31–Pro-205. GTP contacts are provided by residues Gly-39–Ser-46, Gly-66–Leu-70, Asp-84–Gly-87, Thr-151–Asp-154, and Phe-184–Ser-186. Positions 46 and 68 each coordinate Mg(2+).

Belongs to the TRAFAC class TrmE-Era-EngA-EngB-Septin-like GTPase superfamily. EngB GTPase family. Requires Mg(2+) as cofactor.

Necessary for normal cell division and for the maintenance of normal septation. The protein is Probable GTP-binding protein EngB of Shewanella sediminis (strain HAW-EB3).